A 341-amino-acid polypeptide reads, in one-letter code: S-adenosylmethionine:tRNA ribosyltransferase-isomerase (341 aa).

This sequence belongs to the QueA family. As to quaternary structure, monomer.

Its subcellular location is the cytoplasm. It carries out the reaction 7-aminomethyl-7-carbaguanosine(34) in tRNA + S-adenosyl-L-methionine = epoxyqueuosine(34) in tRNA + adenine + L-methionine + 2 H(+). Its pathway is tRNA modification; tRNA-queuosine biosynthesis. Functionally, transfers and isomerizes the ribose moiety from AdoMet to the 7-aminomethyl group of 7-deazaguanine (preQ1-tRNA) to give epoxyqueuosine (oQ-tRNA). This chain is S-adenosylmethionine:tRNA ribosyltransferase-isomerase, found in Chlorobium phaeovibrioides (strain DSM 265 / 1930) (Prosthecochloris vibrioformis (strain DSM 265)).